Reading from the N-terminus, the 141-residue chain is UPF0102 protein BRADO0179 (141 aa).

Positions 1–24 are disordered; sequence MAETDRATDKPAGAPKPAKTASPE. Residues 10 to 19 are compositionally biased toward low complexity; that stretch reads KPAGAPKPAK.

This sequence belongs to the UPF0102 family.

This chain is UPF0102 protein BRADO0179, found in Bradyrhizobium sp. (strain ORS 278).